The sequence spans 795 residues: Phenylalanine--tRNA ligase beta subunit (795 aa).

One can recognise a tRNA-binding domain in the interval 39–148; it reads AGTFNGVVVG…LDAPIGTDLR (110 aa). Positions 401–476 constitute a B5 domain; that stretch reads PKVNTVQLRR…RIYGYNSIPN (76 aa). Asp454, Asp460, Glu463, and Glu464 together coordinate Mg(2+). In terms of domain architecture, FDX-ACB spans 701 to 794; sequence SKFPANRRDL…VKQRFNAELR (94 aa).

The protein belongs to the phenylalanyl-tRNA synthetase beta subunit family. Type 1 subfamily. Tetramer of two alpha and two beta subunits. Mg(2+) is required as a cofactor.

It is found in the cytoplasm. It carries out the reaction tRNA(Phe) + L-phenylalanine + ATP = L-phenylalanyl-tRNA(Phe) + AMP + diphosphate + H(+). In Haemophilus influenzae (strain 86-028NP), this protein is Phenylalanine--tRNA ligase beta subunit.